Consider the following 402-residue polypeptide: uncharacterized protein (402 aa).

11 helical membrane passes run 12–32 (FWLI…ITSV), 48–68 (GAAG…SPLA), 80–100 (TLWL…TGYT), 101–121 (AALF…NVLL), 134–154 (GIMI…ASGV), 168–188 (QAFL…IPQL), 212–232 (WYVT…IAWF), 248–268 (WMVS…PVLA), 291–311 (GLLA…IGIG), 339–359 (MSQS…GYLF), and 367–387 (MPIV…QGAG).

It belongs to the major facilitator superfamily. Cyanate porter (TC 2.A.1.17) family.

The protein resides in the cell membrane. This is an uncharacterized protein from Bacillus subtilis (strain 168).